The sequence spans 181 residues: Organ-specific protein S2 (181 aa).

Repeat copies occupy residues 59–84 (HAKE…DNEI), 85–110 (HAKE…DNEI), 111–136 (HANE…DNEI), and 137–162 (HANE…DNEI). The segment at 59–162 (HAKENMGAIG…NASAYGDNEI (104 aa)) is 4 X 26 AA tandem repeats. Residues 94–181 (GEFEPRPNAS…PRPSMTKYNA (88 aa)) form a disordered region.

It to organ specific protein P4. Expressed in stems.

This chain is Organ-specific protein S2, found in Pisum sativum (Garden pea).